We begin with the raw amino-acid sequence, 227 residues long: MLTTKQKELLLFINDRIKDTGVSPSFDEMKEALDLASKSGIHRLITALEERGFIRRLANRARALEVLKLPDSAIPPPNARQRRDFRPALVTNQGAEAPRIAGMIPLVGRIAAGSPISAIQQENGQVASPGGLPEGDDYFALEVQGDSMIQAGILNGDTVILKRTNTAQTGDIVVALIDGEEATLKRLRRKGASVALEAANPAFETRIFGPDRVEVQGRLVALIRRYE.

The H-T-H motif DNA-binding region spans 26 to 46; the sequence is FDEMKEALDLASKSGIHRLIT. Residues Ser147 and Lys185 each act as for autocatalytic cleavage activity in the active site.

Belongs to the peptidase S24 family. In terms of assembly, homodimer.

The enzyme catalyses Hydrolysis of Ala-|-Gly bond in repressor LexA.. Its function is as follows. Represses a number of genes involved in the response to DNA damage (SOS response), including recA and lexA. In the presence of single-stranded DNA, RecA interacts with LexA causing an autocatalytic cleavage which disrupts the DNA-binding part of LexA, leading to derepression of the SOS regulon and eventually DNA repair. The chain is LexA repressor from Hyphomonas neptunium (strain ATCC 15444).